A 457-amino-acid chain; its full sequence is Putative transposase y4bF (457 aa).

The Integrase catalytic domain occupies 128–313; that stretch reads TFHQPRLRRE…RPLNLAPDRL (186 aa). The tract at residues 406–440 is disordered; sequence QDERPAPKVRTNSEKNGYTPRGRKPGKRTDFMNDP.

This chain is Putative transposase y4bF, found in Sinorhizobium fredii (strain NBRC 101917 / NGR234).